The primary structure comprises 191 residues: FAD-linked sulfhydryl oxidase ERV1 (191 aa).

Positions 72 to 172 (GPVTKEDLGR…FPCERVDARW (101 aa)) constitute an ERV/ALR sulfhydryl oxidase domain. K76, R81, W84, E121, H125, C148, H151, N152, N155, K160, and R171 together coordinate FAD. A disulfide bond links C119 and C122. C148 and C165 are disulfide-bonded. A disulfide bridge connects residues C177 and C182. A Required for dimerization and substrate specificity motif is present at residues 177-182 (CEQKSC).

In terms of assembly, homodimer. FAD serves as cofactor. Post-translationally, contains three disulfide bonds; one catalytic disulfide (Cys-119 to Cys-122), one structural disulfide (Cys-148 to Cys-165), and one shuttle disulfide (Cys-177 to Cys-182).

It is found in the mitochondrion. The enzyme catalyses 2 R'C(R)SH + O2 = R'C(R)S-S(R)CR' + H2O2. FAD-dependent sulfhydryl oxidase that catalyzes disulfide bond formation. Oxidizes thioredoxin in vitro. Required for the import and folding of small cysteine-containing proteins in the mitochondrial intermembrane space, and can act independently of the oxidoreductase MIA40. Can oxidize the cytochrome c oxidase assembly protein COX19, a typical substrate of MIA40. In Arabidopsis thaliana (Mouse-ear cress), this protein is FAD-linked sulfhydryl oxidase ERV1 (ERV1).